The chain runs to 370 residues: Versatile peroxidase VPS1 (370 aa).

The signal sequence occupies residues Met-1–Gly-20. Positions Glu-21–Arg-31 are excised as a propeptide. Disulfide bonds link Cys-34/Cys-46, Cys-45/Cys-315, Cys-65/Cys-151, and Cys-279/Cys-344. 2 residues coordinate Mn(2+): Glu-67 and Glu-71. Catalysis depends on His-78, which acts as the Proton acceptor. Positions 79, 97, 99, and 101 each coordinate Ca(2+). Asn-133 carries N-linked (GlcNAc...) asparagine glycosylation. Residue Trp-201 is the Tryptophan radical intermediate of the active site. His-206 contributes to the heme b binding site. Thr-207 lines the Ca(2+) pocket. Position 210–214 (Ala-210–Val-214) interacts with heme b. Position 212 (Asp-212) interacts with Mn(2+). Ca(2+)-binding residues include Asp-224, Thr-226, Thr-229, and Asp-231.

Belongs to the peroxidase family. Ligninase subfamily. Heme b is required as a cofactor. Ca(2+) serves as cofactor.

The protein resides in the secreted. It catalyses the reaction 1-(4-hydroxy-3-methoxyphenyl)-2-(2-methoxyphenoxy)propane-1,3-diol + H2O2 = guaiacol + vanillin + glycolaldehyde + H2O. The catalysed reaction is 2 Mn(2+) + H2O2 + 2 H(+) = 2 Mn(3+) + 2 H2O. Functionally, a versatile ligninolytic peroxidase that combines the substrate specificity characteristics of the two other ligninolytic peroxidases, manganese peroxidase and lignin peroxidase. The polypeptide is Versatile peroxidase VPS1 (vps1) (Pleurotus eryngii (Boletus of the steppes)).